Here is a 177-residue protein sequence, read N- to C-terminus: Trafficking regulator of GLUT4 1 (177 aa).

Residues 1-105 lie on the Cytoplasmic side of the membrane; sequence MAHPVQSEFP…QDQEAPRDYL (105 aa). S48, S87, and S88 each carry phosphoserine. Residues 71 to 92 are disordered; it reads EAPLPRSPSRASSRRASSIATT. Low complexity predominate over residues 72–88; sequence APLPRSPSRASSRRASS. The helical intramembrane region spans 106–126; sequence ILAVVACFCPVWPLNLIPLII. Topologically, residues 127 to 153 are cytoplasmic; that stretch reads SIMSRSSMQQGNVDGARRLGRLARLLS. The chain crosses the membrane as a helical span at residues 154-174; it reads ITLIIMGIVIIMVAVTVNFTV. Topologically, residues 175–177 are extracellular; sequence QKK.

Belongs to the CD225/Dispanin family. As to quaternary structure, interacts with SLC2A4; the interaction is required for proper SLC2A4 reacycling after insulin stimulation. In terms of tissue distribution, expressed at high levels in heart, mammary gland, adrenal gland, stomach, smooth muscle and skeletal muscle, and at lower levels in brain and lung. Strongly down-regulated in lung cancer tissues, due to hypermethylation of the corresponding locus. Expressed in adipose tissue.

It is found in the cell membrane. Its subcellular location is the endomembrane system. The protein localises to the cytoplasm. The protein resides in the perinuclear region. Its function is as follows. Regulates insulin-mediated adipose tissue glucose uptake and transport by modulation of SLC2A4 recycling. Not required for SLC2A4 membrane fusion upon an initial stimulus, but rather is necessary for proper protein recycling during prolonged insulin stimulation. This Homo sapiens (Human) protein is Trafficking regulator of GLUT4 1.